The chain runs to 305 residues: MLDTSIQALINKWQKYLALQRNYSNHTVISYNNDLKHFLEFMNYYNSELVTINHIKTADIRLIRSWLAKRNCDNFTASSISRGLSAVKNFYRFLEKTTQLNSHIIFSIKSPKKTKLLPKALSEDDVVISLEHIEEYGNVKWVELRNKALLVLIYASGLRISEALSITKLHLQNLEFIRIIGKGSKERIIPWLPIAKNLITQYLEILPYKLGDNEPIFRGKQGKKLQPPVFNRELIKLKHFYGLPQHLTAHSFRHSFASHLLEHGADLRSLQELLGHKSLSTTQNYTKTSIKHLEAVYTTAYPIKK.

The region spanning 4-95 (TSIQALINKW…AVKNFYRFLE (92 aa)) is the Core-binding (CB) domain. In terms of domain architecture, Tyr recombinase spans 116–298 (LLPKALSEDD…SIKHLEAVYT (183 aa)). Catalysis depends on residues arginine 159, lysine 182, histidine 250, arginine 253, and histidine 276. Tyrosine 285 acts as the O-(3'-phospho-DNA)-tyrosine intermediate in catalysis.

Belongs to the 'phage' integrase family. XerC subfamily. Forms a cyclic heterotetrameric complex composed of two molecules of XerC and two molecules of XerD.

The protein resides in the cytoplasm. Site-specific tyrosine recombinase, which acts by catalyzing the cutting and rejoining of the recombining DNA molecules. The XerC-XerD complex is essential to convert dimers of the bacterial chromosome into monomers to permit their segregation at cell division. It also contributes to the segregational stability of plasmids. The polypeptide is Tyrosine recombinase XerC (Rickettsia conorii (strain ATCC VR-613 / Malish 7)).